The chain runs to 267 residues: L-erythrulose-1-phosphate isomerase (267 aa).

Histidine 95 acts as the Electrophile in catalysis. Glutamate 168 serves as the catalytic Proton acceptor. The substrate site is built by glycine 174 and serine 211.

Belongs to the triosephosphate isomerase family. In terms of assembly, homodimer.

The protein resides in the cytoplasm. The catalysed reaction is L-erythrulose 1-phosphate = D-erythrulose 4-phosphate. It functions in the pathway carbohydrate metabolism; erythritol degradation. Its function is as follows. Catalyzes the isomerization of D-erythrulose-4P to L-erythrulose-1P. The chain is L-erythrulose-1-phosphate isomerase from Rhizobium etli (strain ATCC 51251 / DSM 11541 / JCM 21823 / NBRC 15573 / CFN 42).